The chain runs to 270 residues: UPF0354 protein BCE_4835 (270 aa).

This sequence belongs to the UPF0354 family.

The polypeptide is UPF0354 protein BCE_4835 (Bacillus cereus (strain ATCC 10987 / NRS 248)).